Consider the following 338-residue polypeptide: Pyridoxal 5'-phosphate synthase subunit PdxS (338 aa).

Asp66 contributes to the D-ribose 5-phosphate binding site. Residue Lys123 is the Schiff-base intermediate with D-ribose 5-phosphate of the active site. A D-ribose 5-phosphate-binding site is contributed by Gly195. A D-glyceraldehyde 3-phosphate-binding site is contributed by Lys207. D-ribose 5-phosphate-binding positions include Gly256 and 277–278 (GS).

This sequence belongs to the PdxS/SNZ family. In the presence of PdxT, forms a dodecamer of heterodimers.

It catalyses the reaction aldehydo-D-ribose 5-phosphate + D-glyceraldehyde 3-phosphate + L-glutamine = pyridoxal 5'-phosphate + L-glutamate + phosphate + 3 H2O + H(+). It functions in the pathway cofactor biosynthesis; pyridoxal 5'-phosphate biosynthesis. Its function is as follows. Catalyzes the formation of pyridoxal 5'-phosphate from ribose 5-phosphate (RBP), glyceraldehyde 3-phosphate (G3P) and ammonia. The ammonia is provided by the PdxT subunit. Can also use ribulose 5-phosphate and dihydroxyacetone phosphate as substrates, resulting from enzyme-catalyzed isomerization of RBP and G3P, respectively. In Saccharolobus islandicus (strain Y.N.15.51 / Yellowstone #2) (Sulfolobus islandicus), this protein is Pyridoxal 5'-phosphate synthase subunit PdxS.